The primary structure comprises 366 residues: Probable S-adenosyl-L-methionine-binding protein AF_0433 (366 aa).

The region spanning 6–136 (LRQVGVIRSP…YSSTIDSVGN (131 aa)) is the TsaA-like domain. S-adenosyl-L-methionine is bound by residues 23–25 (PHQ), 61–62 (DR), arginine 85, and 116–119 (LDGT).

The protein belongs to the tRNA methyltransferase O family.

The sequence is that of Probable S-adenosyl-L-methionine-binding protein AF_0433 from Archaeoglobus fulgidus (strain ATCC 49558 / DSM 4304 / JCM 9628 / NBRC 100126 / VC-16).